The following is a 500-amino-acid chain: FAD-linked oxidoreductase easE (500 aa).

The FAD-binding PCMH-type domain maps to 37–220 (QGRIPLFTVG…TRATMRVFPD (184 aa)).

The protein belongs to the oxygen-dependent FAD-linked oxidoreductase family. It depends on FAD as a cofactor.

It participates in alkaloid biosynthesis; ergot alkaloid biosynthesis. Its function is as follows. FAD-linked oxidoreductase; part of the gene cluster that mediates the biosynthesis of fungal ergot alkaloid. DmaW catalyzes the first step of ergot alkaloid biosynthesis by condensing dimethylallyl diphosphate (DMAP) and tryptophan to form 4-dimethylallyl-L-tryptophan. The second step is catalyzed by the methyltransferase easF that methylates 4-dimethylallyl-L-tryptophan in the presence of S-adenosyl-L-methionine, resulting in the formation of 4-dimethylallyl-L-abrine. The catalase easC and the FAD-dependent oxidoreductase easE then transform 4-dimethylallyl-L-abrine to chanoclavine-I which is further oxidized by easD in the presence of NAD(+), resulting in the formation of chanoclavine-I aldehyde. Chanoclavine-I aldehyde is the precursor of ergoamides and ergopeptines in Clavicipitaceae, and clavine-type alcaloids such as fumiclavine in Trichocomaceae. However, the metabolites downstream of chanoclavine-I aldehyde in Arthrodermataceae have not been identified yet. The polypeptide is FAD-linked oxidoreductase easE (Arthroderma benhamiae (strain ATCC MYA-4681 / CBS 112371) (Trichophyton mentagrophytes)).